The chain runs to 329 residues: MFKWLLKHRSKPTPLELGIFDQKVSFWKPFLLFCPALLTTFLFTLVPFFLTLQKGFSHNEDIYRVDSQQFGFQTFANLFSESNFILGLRNSFLYSIISLPLTIVLAIIISSAIVFVYRKLARGFWQTVFFLPYVTSGVAVSIAFIYILDSSSGILNNIFHVNIKWLDSGERDTFNALWGILIFGIWKNMAFNVLVISTAMLSVDPTLYKVANLDGAKPIRQFFKITLPSIRPTLIFLLTLLILGGMQVFPISLFNGNDSEAVTNGGSTILLYIFQKIRDQNNNFAGAATLVLFILGVCYGLVLRNGFRLIEWAQWKIKRHYVQTKLNLV.

Helical transmembrane passes span 30–50 (FLLF…PFFL), 96–116 (IISL…IVFV), 128–148 (VFFL…IYIL), 176–196 (ALWG…VLVI), 234–254 (LIFL…ISLF), and 283–303 (NFAG…GLVL). The 216-residue stretch at 88 to 303 (LRNSFLYSII…ILGVCYGLVL (216 aa)) folds into the ABC transmembrane type-1 domain.

It belongs to the binding-protein-dependent transport system permease family. MalFG subfamily.

It localises to the cell membrane. Probably part of a binding-protein-dependent transport system. Probably responsible for the translocation of the substrate across the membrane. The sequence is that of Probable ABC transporter permease protein MG188 homolog from Mycoplasma pneumoniae (strain ATCC 29342 / M129 / Subtype 1) (Mycoplasmoides pneumoniae).